We begin with the raw amino-acid sequence, 380 residues long: Putative heat stress transcription factor B-4a (380 aa).

Positions 216 to 245 are hydrophobic repeat HR-A/B; it reads LLRGNAALVQELAHMRKLYSDIIYFVQNHV. Disordered stretches follow at residues 268–296 and 314–380; these read PAGG…TVAE and INEV…VSPP. The span at 278–296 shows a compositional bias: low complexity; sequence VRGASGRSATSSSSLTVAE. The Nuclear localization signal motif lies at 346–348; it reads RKR.

It belongs to the HSF family. Class B subfamily. Homotrimer. Post-translationally, exhibits temperature-dependent phosphorylation.

The protein resides in the nucleus. Its function is as follows. Transcriptional regulator that specifically binds DNA of heat shock promoter elements (HSE). The chain is Putative heat stress transcription factor B-4a (HSFB4A) from Oryza sativa subsp. japonica (Rice).